The following is a 146-amino-acid chain: Small ribosomal subunit protein bS16 (146 aa).

The disordered stretch occupies residues 119–146 (GSENKGGKSKKAEEKSAEKTAEKSEGEA). Basic and acidic residues predominate over residues 128–146 (KKAEEKSAEKTAEKSEGEA).

Belongs to the bacterial ribosomal protein bS16 family.

This chain is Small ribosomal subunit protein bS16, found in Thermobifida fusca (strain YX).